We begin with the raw amino-acid sequence, 83 residues long: Protein CASPARIAN STRIP INTEGRITY FACTOR 2 (83 aa).

The signal sequence occupies residues 1–28 (MGLLPLVKKLGFIIFLLVSASAFALCSA). The disordered stretch occupies residues 61 to 83 (SRDYGHSSPKPKLVRPPFKLIPN). Sulfotyrosine is present on tyrosine 64. Hydroxyproline is present on residues proline 69 and proline 71.

As to quaternary structure, interacts with the specific receptor kinases GSO1 and GSO2. In terms of tissue distribution, expressed exclusively in the root stele.

Its function is as follows. Peptide hormone required for contiguous Casparian strip diffusion barrier formation in roots via the regulation of CASPs protein expression and distribution in a GSO1-GSO2 signaling pathway. The Casparian strip is required for ion homeostasis (e.g. iron and potassium ions). This Arabidopsis thaliana (Mouse-ear cress) protein is Protein CASPARIAN STRIP INTEGRITY FACTOR 2.